The following is a 230-amino-acid chain: MSSALEELQKDLEEVKVLLEKATRKRVRDALTAEKSKIETEMKNKMQQKSQRKAELTENEKPAAVVAPITTGYTVKISNYGWDQSDKFVKIYITLPGVHQVPAESVQVNFTERSFDLLVKNLNGKSYSMIVNNLLKPISVEGSSKKVKTDTVLILCRKKAENTRWDYLTQVEKECKEKEKPSYDTETDPSEGLMNVLKKIYEDGDDDMKRTINKAWVESREKQAKGDTDF.

Residues 1–82 (MSSALEELQK…YTVKISNYGW (82 aa)) form an interaction with SIAH1 region. At S3 the chain carries Phosphoserine. Residues K10 and K21 each carry the N6-acetyllysine modification. A Phosphoserine modification is found at S36. Positions 38–59 (IETEMKNKMQQKSQRKAELTEN) are disordered. A CS domain is found at 75-169 (VKISNYGWDQ…AENTRWDYLT (95 aa)). Residues 75 to 230 (VKISNYGWDQ…EKQAKGDTDF (156 aa)) are interaction with SKP1. 2 positions are modified to N6-acetyllysine: K87 and K120. The interaction with S100A6 stretch occupies residues 156-230 (CRKKAENTRW…EKQAKGDTDF (75 aa)). An SGS domain is found at 170–230 (QVEKECKEKE…EKQAKGDTDF (61 aa)).

As to quaternary structure, monomer or homodimer. Component of some large E3 complex at least composed of UBE2D1, SIAH1, CACYBP/SIP, SKP1, APC and TBL1X. Interacts directly with SIAH1, SIAH2 and SKP1. Interacts with proteins of the S100 family S100A1, S100A6, S100B, S100P and S100A12 in a calcium-dependent manner. Post-translationally, phosphorylated on serine residues. Phosphorylated upon induction by RA or at high calcium concentrations.

It is found in the nucleus. It localises to the cytoplasm. Functionally, may be involved in calcium-dependent ubiquitination and subsequent proteasomal degradation of target proteins. Probably serves as a molecular bridge in ubiquitin E3 complexes. Participates in the ubiquitin-mediated degradation of beta-catenin (CTNNB1). The polypeptide is Calcyclin-binding protein (CACYBP) (Bos taurus (Bovine)).